Consider the following 183-residue polypeptide: MGVSRSTLRTEEIEEIREVSIFSQREIKRLYKRFKRLDKEEKGSINVEDFNQIPELSMNPMLPRIISIFDVNRDGQVNFKQFVKSLSTFHPKADKADKIKILFKVYDINNDGFITRDEIETILTMMVGSNLTKEQISSIVEETLNEADVNGKGKLDYPDFYNSIGSSGCNAENMLSISFNPFE.

Gly-2 is lipidated: N-myristoyl glycine. EF-hand domains lie at 25–60, 64–92, 94–129, and 135–170; these read REIK…SMNP, RIIS…FHPK, DKAD…MVGS, and QISS…SGCN. Ca(2+) is bound by residues Asp-107, Asn-109, Asp-111, and Glu-118.

This sequence belongs to the calcineurin regulatory subunit family. In terms of assembly, calcineurin is composed of a catalytic subunit (A) and a regulatory subunit (B).

Regulatory subunit of calcineurin, a calcium-dependent, calmodulin stimulated protein phosphatase. Confers calcium sensitivity. The polypeptide is Calcineurin subunit B type 2 (cnbB) (Dictyostelium discoideum (Social amoeba)).